Reading from the N-terminus, the 410-residue chain is Arginine deiminase (410 aa).

C399 serves as the catalytic Amidino-cysteine intermediate.

The protein belongs to the arginine deiminase family.

The protein localises to the cytoplasm. It carries out the reaction L-arginine + H2O = L-citrulline + NH4(+). It functions in the pathway amino-acid degradation; L-arginine degradation via ADI pathway; carbamoyl phosphate from L-arginine: step 1/2. This chain is Arginine deiminase, found in Listeria monocytogenes serotype 4b (strain F2365).